The following is a 317-amino-acid chain: Malate dehydrogenase (317 aa).

Residues 7 to 13 (GAAGGIG) and D34 each bind NAD(+). Residues R81 and R87 each coordinate substrate. Residues N94 and 117–119 (VTN) contribute to the NAD(+) site. N119 and R153 together coordinate substrate. H177 functions as the Proton acceptor in the catalytic mechanism. M231 is an NAD(+) binding site.

It belongs to the LDH/MDH superfamily. MDH type 1 family. As to quaternary structure, homodimer.

It carries out the reaction (S)-malate + NAD(+) = oxaloacetate + NADH + H(+). Catalyzes the reversible oxidation of malate to oxaloacetate. The chain is Malate dehydrogenase from Actinobacillus pleuropneumoniae serotype 5b (strain L20).